The sequence spans 282 residues: Acetyl-coenzyme A carboxylase carboxyl transferase subunit beta (282 aa).

The CoA carboxyltransferase N-terminal domain maps to 29-282 (LWRTCPKCQR…LMKYGGKQND (254 aa)). Zn(2+)-binding residues include C33, C36, C51, and C54. The segment at 33 to 54 (CPKCQRTLFAAQMDEYATCPGC) adopts a C4-type zinc-finger fold.

It belongs to the AccD/PCCB family. In terms of assembly, acetyl-CoA carboxylase is a heterohexamer composed of biotin carboxyl carrier protein (AccB), biotin carboxylase (AccC) and two subunits each of ACCase subunit alpha (AccA) and ACCase subunit beta (AccD). Zn(2+) is required as a cofactor.

The protein localises to the cytoplasm. The catalysed reaction is N(6)-carboxybiotinyl-L-lysyl-[protein] + acetyl-CoA = N(6)-biotinyl-L-lysyl-[protein] + malonyl-CoA. Its pathway is lipid metabolism; malonyl-CoA biosynthesis; malonyl-CoA from acetyl-CoA: step 1/1. Component of the acetyl coenzyme A carboxylase (ACC) complex. Biotin carboxylase (BC) catalyzes the carboxylation of biotin on its carrier protein (BCCP) and then the CO(2) group is transferred by the transcarboxylase to acetyl-CoA to form malonyl-CoA. This chain is Acetyl-coenzyme A carboxylase carboxyl transferase subunit beta, found in Limosilactobacillus fermentum (strain NBRC 3956 / LMG 18251) (Lactobacillus fermentum).